Here is a 193-residue protein sequence, read N- to C-terminus: dCTP deaminase (193 aa).

Residues 110-115 (RSSLAR), Asp-128, 136-138 (VLE), Tyr-171, Lys-178, and Gln-182 contribute to the dCTP site. Residue Glu-138 is the Proton donor/acceptor of the active site. The disordered stretch occupies residues 171-193 (YNKRKNAKYKDQQDAVASRISQD).

The protein belongs to the dCTP deaminase family. As to quaternary structure, homotrimer.

The enzyme catalyses dCTP + H2O + H(+) = dUTP + NH4(+). It participates in pyrimidine metabolism; dUMP biosynthesis; dUMP from dCTP (dUTP route): step 1/2. In terms of biological role, catalyzes the deamination of dCTP to dUTP. The protein is dCTP deaminase of Shewanella oneidensis (strain ATCC 700550 / JCM 31522 / CIP 106686 / LMG 19005 / NCIMB 14063 / MR-1).